We begin with the raw amino-acid sequence, 97 residues long: Small ribosomal subunit protein bS20 (97 aa).

Belongs to the bacterial ribosomal protein bS20 family.

Binds directly to 16S ribosomal RNA. The polypeptide is Small ribosomal subunit protein bS20 (Methylibium petroleiphilum (strain ATCC BAA-1232 / LMG 22953 / PM1)).